The primary structure comprises 373 residues: Queuine tRNA-ribosyltransferase (373 aa).

The active-site Proton acceptor is Asp89. Residues 89–93 (DSGGF), Asp143, Gln192, and Gly220 contribute to the substrate site. The interval 251-257 (GVGTPED) is RNA binding. The active-site Nucleophile is the Asp270. The RNA binding; important for wobble base 34 recognition stretch occupies residues 275 to 279 (TRNAR). Zn(2+) is bound by residues Cys308, Cys310, Cys313, and His339.

It belongs to the queuine tRNA-ribosyltransferase family. Homodimer. Within each dimer, one monomer is responsible for RNA recognition and catalysis, while the other monomer binds to the replacement base PreQ1. The cofactor is Zn(2+).

It carries out the reaction 7-aminomethyl-7-carbaguanine + guanosine(34) in tRNA = 7-aminomethyl-7-carbaguanosine(34) in tRNA + guanine. The protein operates within tRNA modification; tRNA-queuosine biosynthesis. Catalyzes the base-exchange of a guanine (G) residue with the queuine precursor 7-aminomethyl-7-deazaguanine (PreQ1) at position 34 (anticodon wobble position) in tRNAs with GU(N) anticodons (tRNA-Asp, -Asn, -His and -Tyr). Catalysis occurs through a double-displacement mechanism. The nucleophile active site attacks the C1' of nucleotide 34 to detach the guanine base from the RNA, forming a covalent enzyme-RNA intermediate. The proton acceptor active site deprotonates the incoming PreQ1, allowing a nucleophilic attack on the C1' of the ribose to form the product. After dissociation, two additional enzymatic reactions on the tRNA convert PreQ1 to queuine (Q), resulting in the hypermodified nucleoside queuosine (7-(((4,5-cis-dihydroxy-2-cyclopenten-1-yl)amino)methyl)-7-deazaguanosine). This is Queuine tRNA-ribosyltransferase from Aliarcobacter butzleri (strain RM4018) (Arcobacter butzleri).